A 427-amino-acid chain; its full sequence is Enolase (427 aa).

Glutamine 163 contributes to the (2R)-2-phosphoglycerate binding site. The active-site Proton donor is the glutamate 205. Mg(2+) is bound by residues aspartate 242, glutamate 285, and aspartate 312. Positions 337, 366, 367, and 388 each coordinate (2R)-2-phosphoglycerate. The Proton acceptor role is filled by lysine 337.

It belongs to the enolase family. Mg(2+) serves as cofactor.

The protein localises to the cytoplasm. Its subcellular location is the secreted. It localises to the cell surface. It carries out the reaction (2R)-2-phosphoglycerate = phosphoenolpyruvate + H2O. The protein operates within carbohydrate degradation; glycolysis; pyruvate from D-glyceraldehyde 3-phosphate: step 4/5. Functionally, catalyzes the reversible conversion of 2-phosphoglycerate (2-PG) into phosphoenolpyruvate (PEP). It is essential for the degradation of carbohydrates via glycolysis. This is Enolase from Paraburkholderia phytofirmans (strain DSM 17436 / LMG 22146 / PsJN) (Burkholderia phytofirmans).